Here is a 725-residue protein sequence, read N- to C-terminus: mRNA decay activator protein ZFP36L3 (725 aa).

The span at 1-25 (MANNNLNRPLNTNVADSSNSSSTPG) shows a compositional bias: low complexity. Residues 1–119 (MANNNLNRPL…KVSGSSSLAT (119 aa)) are disordered. Polar residues-rich tracts occupy residues 42-72 (APSSSASSLTEDCSSSFARDLNSYNNGQSGA) and 100-119 (HSLQQKPKPQKVSGSSSLAT). C3H1-type zinc fingers lie at residues 122–150 (RYKTELCRPFEESGICKYGHKCQFAHGYR) and 160–188 (KYKTEPCRTFHSVGFCPYGTRCHFIHNQP). A necessary for cytoplasmic localization region spans residues 193-711 (VLSESTLEEP…ESEFDNTNSS (519 aa)). A disordered region spans residues 276–310 (STTAHDADKDPDKDADKDPSNNSANDALAFPQEPG). Positions 280–294 (HDADKDPDKDADKDP) are enriched in basic and acidic residues. The next 4 membrane-spanning stretches (helical) occupy residues 380 to 400 (LAPAAALTPAAALAPGAAMAL), 420 to 440 (AALALGAAMAAGAALAPGAAM), 441 to 461 (APGAAMATGAALAFGAAMATG), and 468 to 488 (AAMALGAAMATGAALAPGAAV). Positions 686-709 (DEDDFLRRSSSSSSLNESEFDNTN) are disordered. Positions 693 to 702 (RSSSSSSLNE) are enriched in low complexity.

Expressed in placenta and extraembryonic tissues (at protein level). Not detected in embryos and fetus.

The protein resides in the cytoplasm. It is found in the membrane. Its function is as follows. Placenta-specific zinc-finger RNA-binding protein that destabilizes cytoplasmic AU-rich element (ARE)-containing mRNA transcripts by promoting their poly(A) tail removal or deadenylation, and hence provide a mechanism for attenuating protein synthesis. Binds to the 3'-UTR ARE of placental target mRNAs, such as TNF, HBEGF and LIPG. Involved in placental expression of many genes important for normal placental physiology. The sequence is that of mRNA decay activator protein ZFP36L3 from Mus musculus (Mouse).